Here is a 305-residue protein sequence, read N- to C-terminus: Acetylglutamate kinase (305 aa).

Residues 67–68 (GG), arginine 89, and asparagine 190 contribute to the substrate site.

The protein belongs to the acetylglutamate kinase family. ArgB subfamily.

It is found in the cytoplasm. The enzyme catalyses N-acetyl-L-glutamate + ATP = N-acetyl-L-glutamyl 5-phosphate + ADP. It participates in amino-acid biosynthesis; L-arginine biosynthesis; N(2)-acetyl-L-ornithine from L-glutamate: step 2/4. In terms of biological role, catalyzes the ATP-dependent phosphorylation of N-acetyl-L-glutamate. This chain is Acetylglutamate kinase, found in Bifidobacterium longum (strain NCC 2705).